A 489-amino-acid chain; its full sequence is Probable 26S proteasome non-ATPase regulatory subunit 3 (489 aa).

The tract at residues Met1–Thr23 is disordered. One can recognise a PCI domain in the interval Cys241–Asp422. A disordered region spans residues Pro454–Phe489. The segment covering Ser457–Ala482 has biased composition (basic and acidic residues).

Belongs to the proteasome subunit S3 family. The 26S proteasome is composed of a core protease, known as the 20S proteasome, capped at one or both ends by the 19S regulatory complex (RC). The RC is composed of at least 18 different subunits in two subcomplexes, the base and the lid, which form the portions proximal and distal to the 20S proteolytic core, respectively.

The protein localises to the nucleus. In terms of biological role, acts as a regulatory subunit of the 26 proteasome which is involved in the ATP-dependent degradation of ubiquitinated proteins. This Daucus carota (Wild carrot) protein is Probable 26S proteasome non-ATPase regulatory subunit 3 (21D7).